The primary structure comprises 865 residues: Ribosome biogenesis protein BOP1 homolog (865 aa).

Disordered regions lie at residues 1–195 (MVAN…LKLG) and 207–240 (KTRG…EEDI). Composition is skewed to acidic residues over residues 30–44 (LDES…ESDY), 57–79 (NEGE…DDVL), and 87–159 (DGEE…EEEA). Over residues 160–180 (KENGKEKPAKAKAERKQREEQ) the composition is skewed to basic and acidic residues. WD repeat units follow at residues 526 to 565 (GHTS…CIRT), 567 to 607 (PTGD…YMLV), 651 to 693 (THFR…SQVP), 696 to 734 (KSKG…MMKK), 737 to 776 (PGCK…KPYQ), 780 to 819 (IHNA…DLLQ), and 835 to 865 (VNDF…RLYT).

It belongs to the WD repeat BOP1/ERB1 family.

It localises to the nucleus. The protein resides in the nucleolus. Its subcellular location is the nucleoplasm. Required for maturation of ribosomal RNAs and formation of the large ribosomal subunit. This is Ribosome biogenesis protein BOP1 homolog from Anopheles gambiae (African malaria mosquito).